The sequence spans 99 residues: MATSIEQQAKGKKDGEIRYLTPLNIETTKAKKYCRFKRSGIKYIDYKDPDFLMGFVNEQGKLLPRRLTGTSLKFQRKVATAVKRARHLALMPYVGDLLK.

This sequence belongs to the bacterial ribosomal protein bS18 family. As to quaternary structure, part of the 30S ribosomal subunit. Forms a tight heterodimer with protein bS6.

Its function is as follows. Binds as a heterodimer with protein bS6 to the central domain of the 16S rRNA, where it helps stabilize the platform of the 30S subunit. In Christiangramia forsetii (strain DSM 17595 / CGMCC 1.15422 / KT0803) (Gramella forsetii), this protein is Small ribosomal subunit protein bS18.